Here is a 518-residue protein sequence, read N- to C-terminus: Glycerophosphoinositol transporter 1 (518 aa).

Residues 1 to 44 (MEDKDITSVNEKEVNENTNPRIIKYDAERRATRTETSKKDKWKN) lie on the Cytoplasmic side of the membrane. Residues 45–65 (IVTIIASGFALISDGYVNGSM) traverse the membrane as a helical segment. Topologically, residues 66–91 (SMLNKVFVMEYGKKNYSSKVSTRVSN) are extracellular. Asn-80 carries N-linked (GlcNAc...) asparagine glycosylation. Residues 92 to 112 (AALVGIIFGQFFMGIAADYYS) traverse the membrane as a helical segment. The Cytoplasmic segment spans residues 113-114 (RK). A helical transmembrane segment spans residues 115–136 (SCILVATAILVIGSALCAASHG). Topologically, residues 137 to 138 (TT) are extracellular. Residues 139-159 (VPGMFWMLTVMRGLVGIGVGA) traverse the membrane as a helical segment. At 160 to 184 (EYPTSTLSANESANEYTTTKRGGIL) the chain is on the cytoplasmic side. Residues 185-205 (VMVTNLPLAFGGPFATIIFLI) traverse the membrane as a helical segment. Residues 206–216 (VYKICSGTKHL) lie on the Extracellular side of the membrane. A helical transmembrane segment spans residues 217–237 (EAIWRTVFAIGCFWPLSVFYF). The Cytoplasmic segment spans residues 238-268 (RWKTATTEVYEKGRIKRNIPYFLALKFYWKR). Residues 269–289 (LLGTCGTWFMYDFVTFPNGIF) traverse the membrane as a helical segment. Residues 290–306 (SSTIISSVIKDQNDLVK) lie on the Extracellular side of the membrane. Residues 307–327 (VAEWNLLLGVLAVLGVPIGAY) traverse the membrane as a helical segment. The Cytoplasmic segment spans residues 328–335 (LSDRIGRK). Residues 336–356 (YTLMFGFSGYIIFGLIIGCAY) form a helical membrane-spanning segment. The Extracellular portion of the chain corresponds to 357–360 (DQLK). Residues 361 to 381 (KITPLFIIFYAFMNMLGNAGP) form a helical membrane-spanning segment. Residues 382–399 (GDMLGVISSEASATAVRG) are Cytoplasmic-facing. Residues 400–420 (VFYGLSAVTGKIGSVVGVECF) traverse the membrane as a helical segment. The Extracellular portion of the chain corresponds to 421-430 (QPIRDNLGAR). A helical membrane pass occupies residues 431–451 (WTFIIAAICGLIGIIITYFFV). Over 452–518 (PHSLESDLMK…IISVRQVDQS (67 aa)) the chain is Cytoplasmic.

The protein belongs to the major facilitator superfamily. Sugar transporter (TC 2.A.1.1) family.

The protein resides in the cell membrane. It catalyses the reaction sn-glycerol 3-phosphocholine(out) = sn-glycerol 3-phosphocholine(in). The catalysed reaction is sn-glycero-3-phospho-1D-myo-inositol(out) = sn-glycero-3-phospho-1D-myo-inositol(in). In terms of biological role, glycerophosphodiester transporter that mediates uptake of both glycerophosphoinositol (GroPIns) and glycerophosphocholine (GroPCho) as sources of the nutrients inositol and phosphate. This chain is Glycerophosphoinositol transporter 1, found in Saccharomyces cerevisiae (strain ATCC 204508 / S288c) (Baker's yeast).